The primary structure comprises 379 residues: NuA4 complex subunit EAF3 homolog (379 aa).

Residues 6 to 61 enclose the Tudor-knot domain; that stretch reads EENEKVLVHHQNRIYEAKIIKVDPKTSKSDKKKPLYFIHYLGWKEKWNEWIEPNKI. The interval 75-212 is disordered; the sequence is TNIKASTTSL…KRNDSKSSHF (138 aa). The span at 78-87 shows a compositional bias: low complexity; sequence KASTTSLNNK. The segment covering 111-141 has biased composition (acidic residues); sequence ENSDEDENESELEDGGGEDADEGGEDIEDQE. Residues 165 to 199 show a composition bias toward low complexity; the sequence is SSSSSSSSKSNNNNNNNNNNNNNNNNNNNNNNNNN. One can recognise an MRG domain in the interval 214-377; it reads STKFIDIEIP…ASSPYLKAAS (164 aa).

As to quaternary structure, component of the NuA4 histone acetyltransferase complex.

Its subcellular location is the nucleus. In terms of biological role, component of the NuA4 histone acetyltransferase complex which is involved in transcriptional activation of selected genes principally by acetylation of nucleosomal histone H4 and H2A. The NuA4 complex is also involved in DNA repair. Also a component of a complex which acts to repress transcription by deacetylation of nucleosomal histones. This Dictyostelium discoideum (Social amoeba) protein is NuA4 complex subunit EAF3 homolog.